The chain runs to 393 residues: Formate-dependent phosphoribosylglycinamide formyltransferase (393 aa).

N(1)-(5-phospho-beta-D-ribosyl)glycinamide is bound by residues 22 to 23 (EL) and Glu82. Residues Arg114, Lys155, 160 to 165 (SSGKGQ), 195 to 198 (EGLV), and Glu203 each bind ATP. One can recognise an ATP-grasp domain in the interval 119-308 (LLAAETLQLP…EFALHVRAFL (190 aa)). Residues Glu267 and Glu279 each contribute to the Mg(2+) site. Residues Asp286, Lys355, and 362 to 363 (RR) each bind N(1)-(5-phospho-beta-D-ribosyl)glycinamide.

The protein belongs to the PurK/PurT family. In terms of assembly, homodimer.

It catalyses the reaction N(1)-(5-phospho-beta-D-ribosyl)glycinamide + formate + ATP = N(2)-formyl-N(1)-(5-phospho-beta-D-ribosyl)glycinamide + ADP + phosphate + H(+). It functions in the pathway purine metabolism; IMP biosynthesis via de novo pathway; N(2)-formyl-N(1)-(5-phospho-D-ribosyl)glycinamide from N(1)-(5-phospho-D-ribosyl)glycinamide (formate route): step 1/1. Involved in the de novo purine biosynthesis. Catalyzes the transfer of formate to 5-phospho-ribosyl-glycinamide (GAR), producing 5-phospho-ribosyl-N-formylglycinamide (FGAR). Formate is provided by PurU via hydrolysis of 10-formyl-tetrahydrofolate. The sequence is that of Formate-dependent phosphoribosylglycinamide formyltransferase from Yersinia enterocolitica serotype O:8 / biotype 1B (strain NCTC 13174 / 8081).